The sequence spans 1146 residues: Transcription-repair-coupling factor (1146 aa).

In terms of domain architecture, Helicase ATP-binding spans 617-778 (DMCQPKAMDR…MNGIRDLSII (162 aa)). 630 to 637 (GDVGFGKT) provides a ligand contact to ATP. Residues 731–734 (DEEH) carry the DEEH box motif. One can recognise a Helicase C-terminal domain in the interval 800–953 (VREAILREIL…GFILATHDLE (154 aa)).

The protein in the N-terminal section; belongs to the UvrB family. It in the C-terminal section; belongs to the helicase family. RecG subfamily.

It localises to the cytoplasm. Couples transcription and DNA repair by recognizing RNA polymerase (RNAP) stalled at DNA lesions. Mediates ATP-dependent release of RNAP and its truncated transcript from the DNA, and recruitment of nucleotide excision repair machinery to the damaged site. The polypeptide is Transcription-repair-coupling factor (Haemophilus influenzae (strain ATCC 51907 / DSM 11121 / KW20 / Rd)).